A 476-amino-acid chain; its full sequence is Probable pectin lyase F (476 aa).

An N-terminal signal peptide occupies residues 1–20 (MTLLRHLLTATALLGASVQA). Cysteines 84 and 108 form a disulfide. N-linked (GlcNAc...) asparagine glycans are attached at residues asparagine 103 and asparagine 131. Arginine 258 is an active-site residue. 2 N-linked (GlcNAc...) asparagine glycosylation sites follow: asparagine 277 and asparagine 318. Cysteines 325 and 333 form a disulfide. An N-linked (GlcNAc...) asparagine glycan is attached at asparagine 385. The segment at 412–476 (FVPAYSEAGP…HHHQGHGRGY (65 aa)) is disordered. The segment covering 426–453 (VPTQPSWSWRTVTNGPAPTGAPSDSPSA) has biased composition (polar residues). A compositionally biased stretch (basic residues) spans 465–476 (NKHHHQGHGRGY).

It belongs to the polysaccharide lyase 1 family.

The protein localises to the secreted. It catalyses the reaction Eliminative cleavage of (1-&gt;4)-alpha-D-galacturonan methyl ester to give oligosaccharides with 4-deoxy-6-O-methyl-alpha-D-galact-4-enuronosyl groups at their non-reducing ends.. Functionally, pectinolytic enzymes consist of four classes of enzymes: pectin lyase, polygalacturonase, pectin methylesterase and rhamnogalacturonase. Among pectinolytic enzymes, pectin lyase is the most important in depolymerization of pectin, since it cleaves internal glycosidic bonds of highly methylated pectins. This is Probable pectin lyase F (pelF) from Aspergillus niger (strain ATCC MYA-4892 / CBS 513.88 / FGSC A1513).